We begin with the raw amino-acid sequence, 457 residues long: Putative adhesion G protein-coupled receptor E4P (457 aa).

A signal peptide spans 1–14 (MGSRFLLVLLSGAS). 6 disulfides stabilise this stretch: C15–C24, C18–C30, C32–C52, C58–C71, C65–C80, and C82–C103. The region spanning 15 to 53 (CPPCPKYASCHNSTHCTCEDGFRARSGRTYFHDSSEKCE) is the EGF-like 1 domain. The Extracellular segment spans residues 16 to 191 (PPCPKYASCH…LAPKEDPVLT (176 aa)). The N-linked (GlcNAc...) asparagine glycan is linked to N26. Residues 54-104 (DINECETGLAKCKYKAYCRNKVGGYICSCLVKYTLFNFLAGIIDYDHPDCY) form the EGF-like 2; calcium-binding domain. Residues N106 and N162 are each glycosylated (N-linked (GlcNAc...) asparagine). Residues 134-186 (DKRTKHICVYWEGSEGGWSTEGCSHVHSNGSYTKCKCFHLSSFAVLVALAPKE) form the GAIN-B domain. Disulfide bonds link C141-C168 and C156-C170. Residues 141–186 (CVYWEGSEGGWSTEGCSHVHSNGSYTKCKCFHLSSFAVLVALAPKE) are GPS. Residues 192-212 (VITQVGLTISLLCLFLAILTF) traverse the membrane as a helical segment. The Cytoplasmic segment spans residues 213–223 (LLCRPIQNTST). The chain crosses the membrane as a helical span at residues 224–244 (SLHLELSLCLFLAHLLFLTGI). N245 carries N-linked (GlcNAc...) asparagine glycosylation. The Extracellular segment spans residues 245-250 (NRTEPE). Residues 251-271 (VLCSIIAGLLHFLYLACFTWM) form a helical membrane-spanning segment. The Cytoplasmic portion of the chain corresponds to 272–299 (LLEGLHLFLTVRNLKVANYTSTGRFKKR). A helical transmembrane segment spans residues 300–320 (FMYPVGYGIPAVIIAVSAIVG). The Extracellular portion of the chain corresponds to 321 to 336 (PQNYGTFTCWLKLDKG). A helical transmembrane segment spans residues 337-357 (FIWSFMGPVAVIILINLVFYF). Topologically, residues 358–384 (QVLWILRSKLSSLNKEVSTIQDTRVMT) are cytoplasmic. A helical membrane pass occupies residues 385 to 405 (FKAISQLFILGCSWGLGFFMV). Residues 406–413 (EEVGKTIG) are Extracellular-facing. A helical transmembrane segment spans residues 414-434 (SIIAYSFTIINTLQGVLLFVV). Residues 435–457 (HCLLNRQVRLIILSVISLVPKSN) are Cytoplasmic-facing.

Belongs to the G-protein coupled receptor 2 family. Adhesion G-protein coupled receptor (ADGR) subfamily. Forms a heterodimer, consisting of a large extracellular region (alpha subunit) non-covalently linked to a seven-transmembrane moiety (beta subunit). In terms of processing, glycosylated. Post-translationally, proteolytically cleaved into 2 subunits, an extracellular alpha subunit and a seven-transmembrane subunit.

The protein resides in the cell membrane. Its subcellular location is the secreted. Functionally, may mediate the cellular interaction between myeloid cells and B-cells. In Homo sapiens (Human), this protein is Putative adhesion G protein-coupled receptor E4P.